A 365-amino-acid chain; its full sequence is Peptide chain release factor 1 (365 aa).

Q236 is subject to N5-methylglutamine.

Belongs to the prokaryotic/mitochondrial release factor family. Methylated by PrmC. Methylation increases the termination efficiency of RF1.

It is found in the cytoplasm. Functionally, peptide chain release factor 1 directs the termination of translation in response to the peptide chain termination codons UAG and UAA. This Latilactobacillus sakei subsp. sakei (strain 23K) (Lactobacillus sakei subsp. sakei) protein is Peptide chain release factor 1.